We begin with the raw amino-acid sequence, 279 residues long: MRKIKIITDSTAGLTLEEAAKWNIDVLYLTVEIDGKVYNPKTDITPEEFMVRMAETKELPKSSQPAIGSFVEAYEKYTAEGYEILSIHLTEKLSGTVNAARQAADMVEGNITVVDCDYTARGQAFQVLKAAEMAQSGDYSVEEIHAKINDIRDKTKLYIVVVTLDNLIKGGRVGRMQGFLGSLLNIKLIAKLTDGQLEEETKVRSNKKVLQYCLNLIKDEPKKIQHLDVVHANGLNLADDFIAESKEITGLTEIPLFFADPVISTHAGTGAFAFMYYTD.

The region spanning isoleucine 4–threonine 278 is the DegV domain. Hexadecanoate is bound by residues serine 62 and serine 94.

In terms of biological role, may bind long-chain fatty acids, such as palmitate, and may play a role in lipid transport or fatty acid metabolism. In Listeria monocytogenes serovar 1/2a (strain ATCC BAA-679 / EGD-e), this protein is DegV domain-containing protein lmo1863.